The chain runs to 233 residues: Large ribosomal subunit protein uL1 (233 aa).

It belongs to the universal ribosomal protein uL1 family. As to quaternary structure, part of the 50S ribosomal subunit.

Functionally, binds directly to 23S rRNA. The L1 stalk is quite mobile in the ribosome, and is involved in E site tRNA release. Its function is as follows. Protein L1 is also a translational repressor protein, it controls the translation of the L11 operon by binding to its mRNA. This Syntrophotalea carbinolica (strain DSM 2380 / NBRC 103641 / GraBd1) (Pelobacter carbinolicus) protein is Large ribosomal subunit protein uL1.